The chain runs to 268 residues: Phosphate import ATP-binding protein PstB 2 (268 aa).

The ABC transporter domain maps to 19 to 263; sequence YKVRNMAFFY…PKDKRTEDYI (245 aa). Residue 51-58 coordinates ATP; that stretch reads GPSGCGKS.

This sequence belongs to the ABC transporter superfamily. Phosphate importer (TC 3.A.1.7) family. The complex is composed of two ATP-binding proteins (PstB), two transmembrane proteins (PstC and PstA) and a solute-binding protein (PstS).

The protein resides in the cell inner membrane. It catalyses the reaction phosphate(out) + ATP + H2O = ADP + 2 phosphate(in) + H(+). In terms of biological role, part of the ABC transporter complex PstSACB involved in phosphate import. Responsible for energy coupling to the transport system. The polypeptide is Phosphate import ATP-binding protein PstB 2 (Gloeobacter violaceus (strain ATCC 29082 / PCC 7421)).